Here is a 1040-residue protein sequence, read N- to C-terminus: Multidrug resistance protein MdtB (1040 aa).

12 consecutive transmembrane segments (helical) span residues 16-36 (FIMR…AGII), 347-367 (LMMA…NIPA), 369-389 (IIPG…MVFL), 396-416 (LTLM…IVVI), 440-460 (IGFT…PLLF), 472-492 (FAIT…TLTP), 537-557 (WLTL…WVFI), 863-883 (LGST…VLGI), 888-908 (FIHP…ALLA), 911-931 (IAGS…IGIV), 968-988 (ILMT…STGV), and 998-1018 (IGMV…TPVI).

Belongs to the resistance-nodulation-cell division (RND) (TC 2.A.6) family. MdtB subfamily. As to quaternary structure, part of a tripartite efflux system composed of MdtA, MdtB and MdtC. MdtB forms a heteromultimer with MdtC.

It localises to the cell inner membrane. The MdtABC tripartite complex confers resistance against novobiocin and deoxycholate. This chain is Multidrug resistance protein MdtB, found in Escherichia coli (strain SE11).